The primary structure comprises 280 residues: Octanoyltransferase LIP2p2, chloroplastic (280 aa).

The N-terminal 34 residues, 1-34 (MVFSVATSSVTNPKLHHHHHLSDFNRNRVSTSLK), are a transit peptide targeting the chloroplast. In terms of domain architecture, BPL/LPL catalytic spans 81-270 (QECSDSLIIL…EFSEVFQLQM (190 aa)). Substrate-binding positions include 123-130 (RGGEVTYH), 191-193 (AIG), and 204-206 (GLA). Cys222 serves as the catalytic Acyl-thioester intermediate.

Belongs to the LipB family. In terms of tissue distribution, expressed in roots, leaves, cauline leaves, stems, siliques and flowers.

The protein localises to the plastid. The protein resides in the chloroplast. The enzyme catalyses octanoyl-[ACP] + L-lysyl-[protein] = N(6)-octanoyl-L-lysyl-[protein] + holo-[ACP] + H(+). Its pathway is protein modification; protein lipoylation via endogenous pathway; protein N(6)-(lipoyl)lysine from octanoyl-[acyl-carrier-protein]: step 1/2. In terms of biological role, catalyzes the transfer of endogenously produced octanoic acid from octanoyl-acyl-carrier-protein onto the lipoyl domains of lipoate-dependent enzymes. Lipoyl-ACP can also act as a substrate although octanoyl-ACP is likely to be the physiological substrate. Together with LIP1P is essential for de novo plastidial protein lipoylation during seed development. Acts redundantly with LIP2P. This Arabidopsis thaliana (Mouse-ear cress) protein is Octanoyltransferase LIP2p2, chloroplastic.